Reading from the N-terminus, the 380-residue chain is Cytochrome b (380 aa).

The next 4 membrane-spanning stretches (helical) occupy residues 33–53 (FGSL…FLAM), 77–98 (WLIR…YLHI), 113–133 (WNIG…GYVL), and 178–198 (FFAF…IHLI). Heme b is bound by residues His83 and His97. Residues His182 and His196 each coordinate heme b. A ubiquinone is bound at residue His201. 4 consecutive transmembrane segments (helical) span residues 226–246 (YKDL…ALFS), 288–308 (LGGV…PVLH), 320–340 (FSQF…WIGG), and 347–367 (FIII…ILVP).

The protein belongs to the cytochrome b family. In terms of assembly, the cytochrome bc1 complex contains 3 respiratory subunits (MT-CYB, CYC1 and UQCRFS1), 2 core proteins (UQCRC1 and UQCRC2) and probably 6 low-molecular weight proteins. The cofactor is heme b.

It localises to the mitochondrion inner membrane. Component of the ubiquinol-cytochrome c reductase complex (complex III or cytochrome b-c1 complex) that is part of the mitochondrial respiratory chain. The b-c1 complex mediates electron transfer from ubiquinol to cytochrome c. Contributes to the generation of a proton gradient across the mitochondrial membrane that is then used for ATP synthesis. The polypeptide is Cytochrome b (mt-cyb) (Astronotus ocellatus (Oscar)).